The sequence spans 153 residues: Actin-related protein 2/3 complex subunit 5-like protein (153 aa).

Residue S64 is modified to Phosphoserine.

The protein belongs to the ARPC5 family. In terms of assembly, may be a component of the Arp2/3 complex in which it may replace ARPC5.

It is found in the cytoplasm. The protein localises to the cytoskeleton. Its subcellular location is the cell projection. Its function is as follows. May function as component of the Arp2/3 complex which is involved in regulation of actin polymerization and together with an activating nucleation-promoting factor (NPF) mediates the formation of branched actin networks. The sequence is that of Actin-related protein 2/3 complex subunit 5-like protein (ARPC5L) from Bos taurus (Bovine).